An 86-amino-acid polypeptide reads, in one-letter code: ATP synthase subunit c (86 aa).

2 helical membrane-spanning segments follow: residues 8–28 (VLGC…GPGI) and 64–84 (TTGL…PLLG).

The protein belongs to the ATPase C chain family. F-type ATPases have 2 components, F(1) - the catalytic core - and F(0) - the membrane proton channel. F(1) has five subunits: alpha(3), beta(3), gamma(1), delta(1), epsilon(1). F(0) has three main subunits: a(1), b(2) and c(10-14). The alpha and beta chains form an alternating ring which encloses part of the gamma chain. F(1) is attached to F(0) by a central stalk formed by the gamma and epsilon chains, while a peripheral stalk is formed by the delta and b chains.

It is found in the cell membrane. In terms of biological role, f(1)F(0) ATP synthase produces ATP from ADP in the presence of a proton or sodium gradient. F-type ATPases consist of two structural domains, F(1) containing the extramembraneous catalytic core and F(0) containing the membrane proton channel, linked together by a central stalk and a peripheral stalk. During catalysis, ATP synthesis in the catalytic domain of F(1) is coupled via a rotary mechanism of the central stalk subunits to proton translocation. Its function is as follows. Key component of the F(0) channel; it plays a direct role in translocation across the membrane. A homomeric c-ring of between 10-14 subunits forms the central stalk rotor element with the F(1) delta and epsilon subunits. This is ATP synthase subunit c from Lachnoclostridium phytofermentans (strain ATCC 700394 / DSM 18823 / ISDg) (Clostridium phytofermentans).